Consider the following 210-residue polypeptide: Redox-sensing transcriptional repressor Rex (210 aa).

Positions 16-55 (IYSRFLKRLDKKGITTVSSGDIAEGVGVSPAQVRKDLAYF) form a DNA-binding region, H-T-H motif. Position 90–95 (90–95 (GAGNLG)) interacts with NAD(+).

The protein belongs to the transcriptional regulatory Rex family. As to quaternary structure, homodimer.

It localises to the cytoplasm. Its function is as follows. Modulates transcription in response to changes in cellular NADH/NAD(+) redox state. This is Redox-sensing transcriptional repressor Rex from Desulforamulus reducens (strain ATCC BAA-1160 / DSM 100696 / MI-1) (Desulfotomaculum reducens).